The chain runs to 498 residues: WD repeat-containing protein 55 homolog (498 aa).

Residues 1 to 133 (MHTHNNFKTP…TFDLDEDDET (133 aa)) are disordered. Acidic residues-rich tracts occupy residues 12-23 (DEDELDDLDEDM), 31-48 (IEQEVLNESDSDNDEYDL), and 83-95 (SDSDDSMLDDAGD). Positions 114 to 123 (PSGSNRQSEA) are enriched in polar residues. 6 WD repeats span residues 155–194 (KLEDFITDICFHPDRDIIALATIIGDVHLYEYDNEANKLL), 199–238 (VHSKACRDVEFTEDGRFLLTCSKDKCVMVTDMETEKLKKL), 242–280 (AHDDAINTLHVLNENLFATGDDAGTVKLWDLRTKNAIFE), 283–322 (ELEDQITQLTTNDQSKLLLATSADGYLTTFNIAARKMYVQ), 325–364 (PYEEELSCMGIYRGDSKLVVGTSKGRLYTYNWGQFGYHCD), and 409–448 (QHNMPIESLDVNSNGELIASSSHNNDVRFWNVKYFEDFGD).

It belongs to the WD repeat WDR55 family.

The polypeptide is WD repeat-containing protein 55 homolog (Drosophila erecta (Fruit fly)).